The sequence spans 918 residues: Protein translocase subunit SecA (918 aa).

Residues Gln-87, 105 to 109 (GEGKT), and Asp-500 contribute to the ATP site. Positions 876-918 (AGALPVAETLERDTPESWRNTPRNAPCPCGSGKKYKHCHGQAR) are disordered. Positions 902, 904, 913, and 914 each coordinate Zn(2+). Positions 908 to 918 (KKYKHCHGQAR) are enriched in basic residues.

The protein belongs to the SecA family. Monomer and homodimer. Part of the essential Sec protein translocation apparatus which comprises SecA, SecYEG and auxiliary proteins SecDF-YajC and YidC. Requires Zn(2+) as cofactor.

Its subcellular location is the cell inner membrane. It localises to the cytoplasm. The catalysed reaction is ATP + H2O + cellular proteinSide 1 = ADP + phosphate + cellular proteinSide 2.. In terms of biological role, part of the Sec protein translocase complex. Interacts with the SecYEG preprotein conducting channel. Has a central role in coupling the hydrolysis of ATP to the transfer of proteins into and across the cell membrane, serving both as a receptor for the preprotein-SecB complex and as an ATP-driven molecular motor driving the stepwise translocation of polypeptide chains across the membrane. The sequence is that of Protein translocase subunit SecA from Rhodospirillum centenum (strain ATCC 51521 / SW).